An 86-amino-acid chain; its full sequence is Kappa-theraphotoxin-Cg1a 6 (86 aa).

The N-terminal stretch at 1–21 (MKVSVLITLAVLGVMFVWASA) is a signal peptide. Residues 22 to 50 (AELEERGSDQRDSPAWLKSMERIFQSEER) constitute a propeptide that is removed on maturation. Intrachain disulfides connect C52–C66, C59–C71, and C65–C78. A Phenylalanine amide modification is found at F84.

Belongs to the neurotoxin 10 (Hwtx-1) family. 28 (Jztx-11) subfamily. As to expression, expressed by the venom gland.

The protein resides in the secreted. Functionally, this toxin acts as a voltage-dependent gating-modifier. It inhibits the sodium conductance (IC(50)=124 nM) and slows the fast inactivation (EC(50)=1180 nM) of Nav1.5/SCN5A. It significantly shifts the activation to more depolarized voltages and decreases the deactivation of Nav1.5 currents upon extreme depolarization, but only slightly affects voltage-dependence of steady-state inactivation. In addition, this toxin causes an approximately five-fold decrease in the rate of recovery from inactivation and an approximately 1.9-fold reduction in the closed-state inactivation rate. This toxin integrates the functions of site 3 toxins (alpha-scorpion toxins) with site 4 toxins (beta-scorpion and spider toxins) by targeting multiple sites on Nav1.5. Also shows inhibition of voltage-gated potassium channels (5 uM completely inhibits Kv2.1/KCNB1, whereas 5 uM moderately inhibits Kv4.2/KCND2 Kv4.1/KCND1 channels). The polypeptide is Kappa-theraphotoxin-Cg1a 6 (Chilobrachys guangxiensis (Chinese earth tiger tarantula)).